Here is a 335-residue protein sequence, read N- to C-terminus: 4-hydroxythreonine-4-phosphate dehydrogenase (335 aa).

2 residues coordinate substrate: His-135 and Thr-136. His-165, His-210, and His-265 together coordinate a divalent metal cation. The substrate site is built by Lys-273, Asn-282, and Arg-291.

This sequence belongs to the PdxA family. Homodimer. It depends on Zn(2+) as a cofactor. Mg(2+) is required as a cofactor. The cofactor is Co(2+).

It localises to the cytoplasm. It catalyses the reaction 4-(phosphooxy)-L-threonine + NAD(+) = 3-amino-2-oxopropyl phosphate + CO2 + NADH. The protein operates within cofactor biosynthesis; pyridoxine 5'-phosphate biosynthesis; pyridoxine 5'-phosphate from D-erythrose 4-phosphate: step 4/5. In terms of biological role, catalyzes the NAD(P)-dependent oxidation of 4-(phosphooxy)-L-threonine (HTP) into 2-amino-3-oxo-4-(phosphooxy)butyric acid which spontaneously decarboxylates to form 3-amino-2-oxopropyl phosphate (AHAP). This is 4-hydroxythreonine-4-phosphate dehydrogenase from Saccharophagus degradans (strain 2-40 / ATCC 43961 / DSM 17024).